Consider the following 330-residue polypeptide: Polyprenal reductase (330 aa).

The Cytoplasmic segment spans residues 1 to 19; sequence MASWVGTELSALNPLRTLW. A helical membrane pass occupies residues 20-40; it reads LALAAAFLLALLLQLAPAGLL. Topologically, residues 41-74 are lumenal; the sequence is PNCALFQDLIRYGKTKLSGPRRPAVCRAFDVPKR. The chain crosses the membrane as a helical span at residues 75–95; that stretch reads YFSHFYVVSVLWNGFLLWFLS. Residues 96 to 132 are Cytoplasmic-facing; the sequence is RSLFLGAPFPNWLRALLRTLGSTQFRALEMESKASQM. The chain crosses the membrane as a helical span at residues 133–153; that stretch reads LVGELALSAFLVLVFLWVHSV. The Lumenal portion of the chain corresponds to 154 to 168; that stretch reads RRLFECFYISVFSNA. A helical membrane pass occupies residues 169 to 189; that stretch reads VMHVVQYCFGLVYYVLVGLTV. At 190-206 the chain is on the cytoplasmic side; it reads LSQVPMDDKNVYMLGKN. A helical membrane pass occupies residues 207–227; sequence LLLPARWFHVLGMMMFLWSSA. Over 228–277 the chain is Lumenal; it reads HQYECHVILSNLRRNKKGAIVHCQHRIPFGDWFEYVSSANYLAELMIYIS. A helical transmembrane segment spans residues 278–298; sequence MAVTFGFHNFTWWLVVAYVFF. The Cytoplasmic segment spans residues 299 to 330; it reads CQALSAFFNHKFYKSTFVSYPKHRKAFLPFLF.

Belongs to the steroid 5-alpha reductase family. Polyprenal reductase subfamily.

The protein localises to the endoplasmic reticulum membrane. The catalysed reaction is a di-trans,poly-cis-dolichal + NADP(+) = a di-trans,poly-cis-polyprenal + NADPH + H(+). It carries out the reaction a 3-oxo-5alpha-steroid + NADP(+) = a 3-oxo-Delta(4)-steroid + NADPH + H(+). The enzyme catalyses androst-4-ene-3,17-dione + NADPH + H(+) = 5alpha-androstan-3,17-dione + NADP(+). It catalyses the reaction 17beta-hydroxy-5alpha-androstan-3-one + NADP(+) = testosterone + NADPH + H(+). The protein operates within protein modification; protein glycosylation. Plays a key role in early steps of protein N-linked glycosylation by being involved in the conversion of polyprenol into dolichol. Acts as a polyprenal reductase that mediates the reduction of polyprenal into dolichal in a NADP-dependent mechanism. Dolichols are required for the synthesis of dolichol-linked monosaccharides and the oligosaccharide precursor used for N-glycosylation. Also able to convert testosterone (T) into 5-alpha-dihydrotestosterone (DHT). The chain is Polyprenal reductase from Mesocricetus auratus (Golden hamster).